A 284-amino-acid chain; its full sequence is Tropomyosin (284 aa).

The stretch at 1 to 284 (MDAIKKKMLA…DQTFAELAGY (284 aa)) forms a coiled coil. A compositionally biased stretch (polar residues) spans 202 to 213 (NNTKSLEISEQE). The segment at 202-223 (NNTKSLEISEQEASQREDSYEE) is disordered. Basic and acidic residues predominate over residues 214 to 223 (ASQREDSYEE).

Belongs to the tropomyosin family. In terms of assembly, homodimer.

Its function is as follows. Tropomyosin, in association with the troponin complex, plays a central role in the calcium dependent regulation of muscle contraction. The chain is Tropomyosin from Haliotis rufescens (California red abalone).